The sequence spans 113 residues: MPFQSTVGDYQTVATLETFGFLPPMTQDEIYDQIAYIIAQGWSPLVEHVHPSNSMATYWSYWKLPFFGEKDLNVVVSELEACHRAYPDHHVRIVGYDAYTQSQGACFVVFEGR.

This sequence belongs to the RuBisCO small chain family. As to quaternary structure, heterohexadecamer of 8 large and 8 small subunits.

It is found in the carboxysome. RuBisCO catalyzes two reactions: the carboxylation of D-ribulose 1,5-bisphosphate, the primary event in carbon dioxide fixation, as well as the oxidative fragmentation of the pentose substrate in the photorespiration process. Both reactions occur simultaneously and in competition at the same active site. Although the small subunit is not catalytic it is essential for maximal activity. In Synechococcus sp. (strain WH7803), this protein is Ribulose bisphosphate carboxylase small subunit.